Consider the following 274-residue polypeptide: ATP synthase subunit a (274 aa).

5 helical membrane-spanning segments follow: residues 43–63 (TLNIDSLFFSVVLGLAFLLVF), 103–123 (VIAPLALTVFVWVLLMNMMDL), 149–169 (DVSITLSMALGVFILIIFYSI), 223–243 (LIFILIAGLLPWWSQWMLSVP), and 245–265 (AIFHILIITLQAFIFMVLTIV).

Belongs to the ATPase A chain family. In terms of assembly, F-type ATPases have 2 components, CF(1) - the catalytic core - and CF(0) - the membrane proton channel. CF(1) has five subunits: alpha(3), beta(3), gamma(1), delta(1), epsilon(1). CF(0) has three main subunits: a(1), b(2) and c(9-12). The alpha and beta chains form an alternating ring which encloses part of the gamma chain. CF(1) is attached to CF(0) by a central stalk formed by the gamma and epsilon chains, while a peripheral stalk is formed by the delta and b chains.

It localises to the cell inner membrane. Key component of the proton channel; it plays a direct role in the translocation of protons across the membrane. The chain is ATP synthase subunit a from Yersinia pestis bv. Antiqua (strain Antiqua).